A 380-amino-acid polypeptide reads, in one-letter code: MAPNPRKSHPLLKMINNSLIDLPTPPNISAWWNFGSLLALCLMTQILTGLLLAMHYTADTTLAFSSVAHTCRNVQYGWLIRNMHANGASFFFICIYMHIGRGFYYGSYLHKETWNTGVLLLLTLMATAFVGYVLPWGQMSFWGATVITNMFSAIPYIGQTIVEWAWGGFSVDNPTLTRFFALHFLLPFMIAGLTLIHLTFLHESGSNNPLGIVSNCDKIPFHPYYSLKDILGLALLLLPLTTMALFSPNLLGDPENFTPANPLVTPPHIKPEWYFLFAYAILRSIPNKLGGVLALAASVLVLFLSPLLHKSKQRTMAFRPLSQLLFWTLVANLFILTWIGSQPVEHPFIIIGQLASTTYFTILLILFPITSALENKMLNF.

4 consecutive transmembrane segments (helical) span residues 34–54 (FGSL…LLAM), 78–99 (WLIR…YMHI), 114–134 (WNTG…GYVL), and 179–199 (FFAL…IHLT). Heme b is bound by residues His84 and His98. 2 residues coordinate heme b: His183 and His197. His202 contacts a ubiquinone. 4 consecutive transmembrane segments (helical) span residues 227 to 247 (LKDI…ALFS), 289 to 309 (LGGV…PLLH), 321 to 341 (LSQL…WIGS), and 348 to 368 (FIII…ILFP).

This sequence belongs to the cytochrome b family. In terms of assembly, the cytochrome bc1 complex contains 11 subunits: 3 respiratory subunits (MT-CYB, CYC1 and UQCRFS1), 2 core proteins (UQCRC1 and UQCRC2) and 6 low-molecular weight proteins (UQCRH/QCR6, UQCRB/QCR7, UQCRQ/QCR8, UQCR10/QCR9, UQCR11/QCR10 and a cleavage product of UQCRFS1). This cytochrome bc1 complex then forms a dimer. Heme b serves as cofactor.

The protein localises to the mitochondrion inner membrane. Component of the ubiquinol-cytochrome c reductase complex (complex III or cytochrome b-c1 complex) that is part of the mitochondrial respiratory chain. The b-c1 complex mediates electron transfer from ubiquinol to cytochrome c. Contributes to the generation of a proton gradient across the mitochondrial membrane that is then used for ATP synthesis. This is Cytochrome b (MT-CYB) from Oceanodroma furcata (Fork-tailed storm-petrel).